A 385-amino-acid chain; its full sequence is GTPase Obg (385 aa).

The Obg domain maps to 1–159 (MHFIDQAEIE…RRLRLELKLI (159 aa)). The OBG-type G domain occupies 160–328 (AEVGIVGMPN…LLQRVWQCLG (169 aa)). GTP-binding positions include 166 to 173 (GMPNAGKS), 191 to 195 (FTTLQ), 213 to 216 (DIPG), 280 to 283 (NKID), and 309 to 311 (SAV). Mg(2+) is bound by residues Ser173 and Thr193.

Belongs to the TRAFAC class OBG-HflX-like GTPase superfamily. OBG GTPase family. In terms of assembly, monomer. Mg(2+) is required as a cofactor.

It is found in the cytoplasm. Functionally, an essential GTPase which binds GTP, GDP and possibly (p)ppGpp with moderate affinity, with high nucleotide exchange rates and a fairly low GTP hydrolysis rate. Plays a role in control of the cell cycle, stress response, ribosome biogenesis and in those bacteria that undergo differentiation, in morphogenesis control. In Synechococcus sp. (strain JA-3-3Ab) (Cyanobacteria bacterium Yellowstone A-Prime), this protein is GTPase Obg.